The sequence spans 667 residues: Small ribosomal subunit protein mS39 (667 aa).

Residues Met-1–His-11 constitute a mitochondrion transit peptide. Residues Glu-199 to Asp-226 are disordered. PPR repeat units follow at residues Asn-249–Ala-283, Asp-284–Pro-323, Asn-324–Pro-360, Ser-361–Pro-400, Ser-482–Asn-516, and Thr-565–Pro-599.

The protein belongs to the mitochondrion-specific ribosomal protein mS39 family.

It localises to the mitochondrion. Mitochondrial RNA-binding protein that may have a role in mitochondrial translation. The chain is Small ribosomal subunit protein mS39 (ptcd3) from Danio rerio (Zebrafish).